The sequence spans 617 residues: Bifunctional TH2 protein, mitochondrial (617 aa).

The transit peptide at 1–28 directs the protein to the mitochondrion; sequence MRFLFPTRLINNSSLGLLRSPHTTAPIR. Position 107 (D107) interacts with substrate. C213 serves as the catalytic Nucleophile. Residues Y217 and Y244 each contribute to the substrate site. Residue E286 is the Proton donor of the active site.

In the N-terminal section; belongs to the TenA family. This sequence in the C-terminal section; belongs to the HAD-like hydrolase superfamily.

The protein resides in the mitochondrion. The protein localises to the cytoplasm. It carries out the reaction thiamine phosphate + H2O = thiamine + phosphate. The catalysed reaction is 4-amino-5-aminomethyl-2-methylpyrimidine + H2O = 4-amino-5-hydroxymethyl-2-methylpyrimidine + NH4(+). In terms of biological role, may be involved in the salvage of thiamine breakdown products. This protein has a haloacid dehalogenase family domain fused to its TenA domain. Phosphatase with the highest activity against thiamine monophosphate (ThMP) and, with a lower activity, against thiamine diphosphate (ThDP), flavin mononucleotide, inorganic pyrophosphate, CTP and dATP. Has a thiamine salvage hydrolase activity, but only against 4-amino-5-aminomethyl-2-methylpyrimidine (amino-HMP) and not against N-formylamino-HMP, desthiothiamine, thiamine, ThMP, and ThDP. The polypeptide is Bifunctional TH2 protein, mitochondrial (Arabidopsis thaliana (Mouse-ear cress)).